A 266-amino-acid chain; its full sequence is MSWFEALILGIVQGLTEYLPVSSSGHLAIGSALFGIEGEENLAFTIVVHVATVFSTLVVLWKEIDWIFRGLFKFQMNAETKYVINILISMIPIGIVGVFFKDTVEQIFGSGLLVVGCMLLLTAALLAFSYYAKPRQKESISMKDAFIIGLAQACAVMPGLSRSGSTIATGLLLGNNKAKLAQFSFLMVIPPILGEALLDVMKMVKGEDVAGDIPALSLAVGFMAAFVSGCVACKWMINIVKKGKLIYFAIYCAIAGLVTIACTLLK.

7 consecutive transmembrane segments (helical) span residues asparagine 41–tryptophan 61, threonine 80–phenylalanine 100, isoleucine 107–alanine 127, isoleucine 140–leucine 160, leucine 180–valine 200, isoleucine 213–cysteine 233, and leucine 245–leucine 265.

It belongs to the UppP family.

The protein localises to the cell inner membrane. The catalysed reaction is di-trans,octa-cis-undecaprenyl diphosphate + H2O = di-trans,octa-cis-undecaprenyl phosphate + phosphate + H(+). Its function is as follows. Catalyzes the dephosphorylation of undecaprenyl diphosphate (UPP). Confers resistance to bacitracin. This Parabacteroides distasonis (strain ATCC 8503 / DSM 20701 / CIP 104284 / JCM 5825 / NCTC 11152) protein is Undecaprenyl-diphosphatase.